Consider the following 150-residue polypeptide: Protein Smg homolog (150 aa).

This sequence belongs to the Smg family.

The polypeptide is Protein Smg homolog (Methylobacillus flagellatus (strain ATCC 51484 / DSM 6875 / VKM B-1610 / KT)).